A 605-amino-acid polypeptide reads, in one-letter code: Dolichyl-diphosphooligosaccharide--protein glycosyltransferase subunit 1 (605 aa).

A signal peptide spans 1 to 22 (MEAPIVLLLLLWLALAPTPGSA). The Lumenal portion of the chain corresponds to 23 to 437 (SSEAPPLVNE…FNKVLMLQEP (415 aa)). At Lys-185 the chain carries N6-acetyllysine. Asn-297 carries N-linked (GlcNAc...) asparagine glycosylation. A helical membrane pass occupies residues 438–455 (LLVVAAFYILFFTVIIYV). At 456-605 (RLDFSITKDP…TKIDHILDAL (150 aa)) the chain is on the cytoplasmic side. Lys-536 carries the post-translational modification N6-acetyllysine; alternate. Lys-536 is covalently cross-linked (Glycyl lysine isopeptide (Lys-Gly) (interchain with G-Cter in SUMO2); alternate).

This sequence belongs to the OST1 family. Component of the oligosaccharyltransferase (OST) complex. OST exists in two different complex forms which contain common core subunits RPN1, RPN2, OST48, OST4, DAD1 and TMEM258, either STT3A or STT3B as catalytic subunits, and form-specific accessory subunits. STT3A complex assembly occurs through the formation of 3 subcomplexes. Subcomplex 1 contains RPN1 and TMEM258, subcomplex 2 contains the STT3A-specific subunits STT3A, DC2/OSTC, and KCP2 as well as the core subunit OST4, and subcomplex 3 contains RPN2, DAD1, and OST48. The STT3A complex can form stable complexes with the Sec61 complex or with both the Sec61 and TRAP complexes. Interacts with TMEM35A/NACHO. Ubiquitinated by the ECS(ASB11) complex. Post-translationally, ufmylated by UFL1 in response to endoplasmic reticulum stress, promoting reticulophagy of endoplasmic reticulum sheets. In terms of tissue distribution, expressed in all tissues tested.

The protein resides in the endoplasmic reticulum membrane. It functions in the pathway protein modification; protein glycosylation. In terms of biological role, subunit of the oligosaccharyl transferase (OST) complex that catalyzes the initial transfer of a defined glycan (Glc(3)Man(9)GlcNAc(2) in eukaryotes) from the lipid carrier dolichol-pyrophosphate to an asparagine residue within an Asn-X-Ser/Thr consensus motif in nascent polypeptide chains, the first step in protein N-glycosylation. N-glycosylation occurs cotranslationally and the complex associates with the Sec61 complex at the channel-forming translocon complex that mediates protein translocation across the endoplasmic reticulum (ER). All subunits are required for a maximal enzyme activity. In Rattus norvegicus (Rat), this protein is Dolichyl-diphosphooligosaccharide--protein glycosyltransferase subunit 1.